Here is a 911-residue protein sequence, read N- to C-terminus: MSQVTLLDEVSQWNQETCQQELKTVLPKLVAMHHDTDSWEEHTNILQIITSRFLPHLSLSDLETGCFSTALPKVVKVFASLLEEISKQIGGLSSQNTELQLFLRKILKTMVQTLECLSGCVRHVCSIEESVSFSNIRSLPSCILGVLKDTFQHCKDSEVMYSGRLSLVGDLLQGLFKEAYSLQKGLMELLDKINFEDTASEEEISDIVTVIHSLLDICLIISRLDIALHANTWKFIIKQSIKYQSLVEDRLHHTDISFALCEDLCRSVENCLELAQQIQQAGLQEAVHSPEYKLFQKATKMCRFFANTLVHYTKEFKVFLSKSCSRFHQLYLQINSKFLPSLCAPSVPPTLSEELRVAVLVPMDAMLTQMMSFQPFAESVLNPDHQSSAKLFLPQCLLLVNVMGKLSSQPEEALRLWSDGSQFPEETPRWSVFEAVFQSFRLCVLERLVPVCLPGVMLRGQAQGTVSLHQHVCVHMCACVAVLPAQHFPPLERSLLAAVLQADTQTALLATDVWCFLARYGTAELCYHHVVLIAHLLRACPAGGYQLFHLALVLRRLLFLMTPKHQVEFVERFPLSQEENLCVWRHTLLKCLCVEARVRVEEQVLDRATVVLEEWQNSGCRLGEIPRLNRILDCVLLVVGGSGTQNECVESLVKIISQLWSHMRSSQVQVHVTLQCTVKLLLSLSAVLIKSLEPHIILQAVSCLSGLSIHQCPDDLLLAALEFLASLGQIFIPPNIQGQVLPQISSLFNGFLTRPSWLILHHVLEAFGCFAEITNHEEVISQTLKTEEVKSKVLNFLSKTVSRQESEETRLERLKEWKCVIEKHCQQMESEKSQPAQTPLTEEPCAKRARQETKAEEEYERYLQTAEGALKALQAIERSEHSPSPPQWVRARLQLLQTLITQINTTTEEQS.

The segment at 830–853 is disordered; sequence SEKSQPAQTPLTEEPCAKRARQET. Basic and acidic residues predominate over residues 844 to 853; the sequence is PCAKRARQET.

It localises to the chromosome. It is found in the centromere. The protein resides in the kinetochore. The protein localises to the nucleus. Its subcellular location is the midbody. It localises to the cytoplasm. It is found in the cytoskeleton. The protein resides in the spindle. May play a role in chromosome segregation. This Danio rerio (Zebrafish) protein is FIGNL1-interacting regulator of recombination and mitosis.